The following is a 26-amino-acid chain: Toxin b subunit alpha (26 aa).

As to quaternary structure, toxin b is a heterodimer composed of toxin alpha and toxin beta. In terms of tissue distribution, expressed by the venom gland.

The protein localises to the secreted. Functionally, binds to sodium channels (Nav) and affects the channel activation process. In Androctonus crassicauda (Arabian fat-tailed scorpion), this protein is Toxin b subunit alpha.